Reading from the N-terminus, the 286-residue chain is uncharacterized protein (286 aa).

The next 6 helical transmembrane spans lie at 52–74 (ILWT…LIGL), 79–101 (LIAI…FLFL), 142–161 (WWDP…VSFF), 168–190 (VLVF…GAIL), 203–225 (IQAT…VALV), and 257–276 (IIWI…ASFM).

It is found in the cell membrane. This is an uncharacterized protein from Archaeoglobus fulgidus (strain ATCC 49558 / DSM 4304 / JCM 9628 / NBRC 100126 / VC-16).